The primary structure comprises 205 residues: Small ribosomal subunit protein uS4 (205 aa).

In terms of domain architecture, S4 RNA-binding spans 103-173 (RRLQTIVMKK…LEKSKRAEAA (71 aa)). Positions 174–205 (AREAAAEAAEAEQAAAQAAAPTPAPAAAAPKQ) are disordered. The span at 179–205 (AEAAEAEQAAAQAAAPTPAPAAAAPKQ) shows a compositional bias: low complexity.

This sequence belongs to the universal ribosomal protein uS4 family. Part of the 30S ribosomal subunit. Contacts protein S5. The interaction surface between S4 and S5 is involved in control of translational fidelity.

One of the primary rRNA binding proteins, it binds directly to 16S rRNA where it nucleates assembly of the body of the 30S subunit. In terms of biological role, with S5 and S12 plays an important role in translational accuracy. The sequence is that of Small ribosomal subunit protein uS4 from Cenarchaeum symbiosum (strain A).